The following is a 448-amino-acid chain: Tryptophan dimethylallyltransferase 1 (448 aa).

L-tryptophan-binding positions include 80–81 and Glu-89; that span reads IL. The substrate site is built by Arg-100, Lys-186, and Tyr-188. L-tryptophan contacts are provided by Tyr-190 and Arg-249. Arg-262, Lys-264, Tyr-266, Gln-348, Tyr-350, Tyr-414, and Tyr-418 together coordinate substrate.

The protein belongs to the tryptophan dimethylallyltransferase family. As to quaternary structure, homodimer.

The enzyme catalyses L-tryptophan + dimethylallyl diphosphate = 4-(3-methylbut-2-enyl)-L-tryptophan + diphosphate. Its pathway is alkaloid biosynthesis; ergot alkaloid biosynthesis. Its function is as follows. Tryptophan dimethylallyltransferase; part of the gene cluster that mediates the biosynthesis of fungal ergot alkaloid. DmaW catalyzes the first step of ergot alkaloid biosynthesis by condensing dimethylallyl diphosphate (DMAP) and tryptophan to form 4-dimethylallyl-L-tryptophan. The second step is catalyzed by the methyltransferase easF that methylates 4-dimethylallyl-L-tryptophan in the presence of S-adenosyl-L-methionine, resulting in the formation of 4-dimethylallyl-L-abrine. The catalase easC and the FAD-dependent oxidoreductase easE then transform 4-dimethylallyl-L-abrine to chanoclavine-I which is further oxidized by easD in the presence of NAD(+), resulting in the formation of chanoclavine-I aldehyde. Agroclavine dehydrogenase easG then mediates the conversion of chanoclavine-I aldehyde to agroclavine via a non-enzymatic adduct reaction: the substrate is an iminium intermediate that is formed spontaneously from chanoclavine-I aldehyde in the presence of glutathione. The presence of easA is not required to complete this reaction. Further conversion of agroclavine to paspalic acid is a two-step process involving oxidation of agroclavine to elymoclavine and of elymoclavine to paspalic acid, the second step being performed by the elymoclavine oxidase cloA. Paspalic acid is then further converted to D-lysergic acid. Ergopeptines are assembled from D-lysergic acid and three different amino acids by the D-lysergyl-peptide-synthetases composed each of a monomudular and a trimodular nonribosomal peptide synthetase subunit. LpsB and lpsC encode the monomodular subunits responsible for D-lysergic acid activation and incorporation into the ergopeptine backbone. LpsA1 and A2 subunits encode the trimodular nonribosomal peptide synthetase assembling the tripeptide portion of ergopeptines. LpsA1 is responsible for formation of the major ergopeptine, ergotamine, and lpsA2 for alpha-ergocryptine, the minor ergopeptine of the total alkaloid mixture elaborated by C.purpurea. D-lysergyl-tripeptides are assembled by the nonribosomal peptide synthetases and released as N-(D-lysergyl-aminoacyl)-lactams. Cyclolization of the D-lysergyl-tripeptides is performed by the Fe(2+)/2-ketoglutarate-dependent dioxygenase easH which introduces a hydroxyl group into N-(D-lysergyl-aminoacyl)-lactam at alpha-C of the aminoacyl residue followed by spontaneous condensation with the terminal lactam carbonyl group. This is Tryptophan dimethylallyltransferase 1 from Claviceps purpurea (strain 20.1) (Ergot fungus).